A 134-amino-acid chain; its full sequence is Small ribosomal subunit protein uS11 (134 aa).

The tract at residues 115–134 is disordered; it reads VTPIPTDSTRRKGGRRGRRL. Residues 125–134 show a composition bias toward basic residues; that stretch reads RKGGRRGRRL.

This sequence belongs to the universal ribosomal protein uS11 family.

The sequence is that of Small ribosomal subunit protein uS11 (RPS14) from Syntrichia ruralis (Great hairy screw-moss).